We begin with the raw amino-acid sequence, 94 residues long: Alpha-conotoxin-like Cp20.2 (94 aa).

The signal sequence occupies residues 1-24; the sequence is MPKLAVVLLVLLILPLSYFDAAGG. Residues 25 to 45 constitute a propeptide that is removed on maturation; it reads QAVQWDRRGNGLARYLQRGDR. Disulfide bonds link C63–C72, C68–C80, C73–C90, and C78–C92.

It belongs to the conotoxin D superfamily. Hetero-, homo- or pseudo-homodimer (identical sequence, different post-translational modifications). In terms of tissue distribution, expressed by the venom duct.

It is found in the secreted. Its function is as follows. Alpha-conotoxins act on postsynaptic membranes, they bind to the nicotinic acetylcholine receptors (nAChR) and thus inhibit them. Through its two C-terminal domains, this homodimeric protein would bind to two nAChR allosteric sites, located outside the nAChR C-loop of the principal binding face and at the adjacent binding interface in a clockwise direction. This toxin specifically blocks mammalian neuronal nAChR of the alpha-7/CHRNA7, alpha-3-beta-2/CHRNA3-CHRNB2 and alpha-4-beta-2/CHRNA4-CHRNB2 subtypes. This is Alpha-conotoxin-like Cp20.2 from Conus capitaneus (Captain cone).